The primary structure comprises 369 residues: Anhydro-N-acetylmuramic acid kinase (369 aa).

An ATP-binding site is contributed by 12–19 (GTSMDGVD).

It belongs to the anhydro-N-acetylmuramic acid kinase family.

It carries out the reaction 1,6-anhydro-N-acetyl-beta-muramate + ATP + H2O = N-acetyl-D-muramate 6-phosphate + ADP + H(+). Its pathway is amino-sugar metabolism; 1,6-anhydro-N-acetylmuramate degradation. It participates in cell wall biogenesis; peptidoglycan recycling. In terms of biological role, catalyzes the specific phosphorylation of 1,6-anhydro-N-acetylmuramic acid (anhMurNAc) with the simultaneous cleavage of the 1,6-anhydro ring, generating MurNAc-6-P. Is required for the utilization of anhMurNAc either imported from the medium or derived from its own cell wall murein, and thus plays a role in cell wall recycling. This is Anhydro-N-acetylmuramic acid kinase from Shewanella putrefaciens (strain CN-32 / ATCC BAA-453).